Consider the following 228-residue polypeptide: Ribose-5-phosphate isomerase A (228 aa).

Residues 26–29 (SGST), 81–84 (DGAD), and 94–97 (KGGG) contribute to the substrate site. The active-site Proton acceptor is the glutamate 103. Residue lysine 121 participates in substrate binding.

The protein belongs to the ribose 5-phosphate isomerase family. Homodimer.

The catalysed reaction is aldehydo-D-ribose 5-phosphate = D-ribulose 5-phosphate. The protein operates within carbohydrate degradation; pentose phosphate pathway; D-ribose 5-phosphate from D-ribulose 5-phosphate (non-oxidative stage): step 1/1. Its function is as follows. Catalyzes the reversible conversion of ribose-5-phosphate to ribulose 5-phosphate. This is Ribose-5-phosphate isomerase A from Shouchella clausii (strain KSM-K16) (Alkalihalobacillus clausii).